A 430-amino-acid chain; its full sequence is Serine--tRNA ligase (430 aa).

An L-serine-binding site is contributed by 237–239 (TAE). 268–270 (RSE) lines the ATP pocket. Residue Glu-291 coordinates L-serine. Position 355–358 (355–358 (EISS)) interacts with ATP. Ser-391 contacts L-serine.

This sequence belongs to the class-II aminoacyl-tRNA synthetase family. Type-1 seryl-tRNA synthetase subfamily. In terms of assembly, homodimer. The tRNA molecule binds across the dimer.

It localises to the cytoplasm. It catalyses the reaction tRNA(Ser) + L-serine + ATP = L-seryl-tRNA(Ser) + AMP + diphosphate + H(+). The catalysed reaction is tRNA(Sec) + L-serine + ATP = L-seryl-tRNA(Sec) + AMP + diphosphate + H(+). It participates in aminoacyl-tRNA biosynthesis; selenocysteinyl-tRNA(Sec) biosynthesis; L-seryl-tRNA(Sec) from L-serine and tRNA(Sec): step 1/1. Catalyzes the attachment of serine to tRNA(Ser). Is also able to aminoacylate tRNA(Sec) with serine, to form the misacylated tRNA L-seryl-tRNA(Sec), which will be further converted into selenocysteinyl-tRNA(Sec). The sequence is that of Serine--tRNA ligase from Shigella dysenteriae serotype 1 (strain Sd197).